A 404-amino-acid polypeptide reads, in one-letter code: Tripartite motif-containing 13 (404 aa).

An RING-type zinc finger spans residues 10–56; it reads CPICCCLFEDPRVLPCSHSFCKKCLEGILDGNRSPTWRPPFKCPTCR. The B box-type zinc finger occupies 87-129; that stretch reads PRMSQCRVHSGQPLNIFCATDLKLICGFCATTGDHKGHKFCAL. Cysteine 92, histidine 95, cysteine 115, and histidine 121 together coordinate Zn(2+). The chain crosses the membrane as a helical span at residues 102–119; the sequence is IFCATDLKLICGFCATTG. The stretch at 186 to 236 forms a coiled coil; that stretch reads KLLRTLEHKRSEILSDLETLKLAVMQTFDPEINRLRSALEEQRRALNIAES.

Its subcellular location is the endoplasmic reticulum membrane. It functions in the pathway protein modification; protein ubiquitination. E3 ubiquitin ligase involved in the retrotranslocation and turnover of membrane and secretory proteins from the ER through a set of processes named ER-associated degradation (ERAD). This process acts on misfolded proteins as well as in the regulated degradation of correctly folded proteins. This is Tripartite motif-containing 13 (trim13) from Danio rerio (Zebrafish).